The chain runs to 449 residues: Xylose isomerase (449 aa).

Residues His-101 and Asp-104 contribute to the active site. Glu-232, Glu-268, His-271, Asp-296, Asp-307, Asp-309, and Asp-340 together coordinate Mg(2+).

Belongs to the xylose isomerase family. Homotetramer. It depends on Mg(2+) as a cofactor.

It is found in the cytoplasm. The enzyme catalyses alpha-D-xylose = alpha-D-xylulofuranose. This Bifidobacterium longum (strain DJO10A) protein is Xylose isomerase.